Consider the following 275-residue polypeptide: Tryptophan synthase alpha chain (275 aa).

Catalysis depends on proton acceptor residues Glu51 and Asp62.

The protein belongs to the TrpA family. As to quaternary structure, tetramer of two alpha and two beta chains.

It catalyses the reaction (1S,2R)-1-C-(indol-3-yl)glycerol 3-phosphate + L-serine = D-glyceraldehyde 3-phosphate + L-tryptophan + H2O. It participates in amino-acid biosynthesis; L-tryptophan biosynthesis; L-tryptophan from chorismate: step 5/5. In terms of biological role, the alpha subunit is responsible for the aldol cleavage of indoleglycerol phosphate to indole and glyceraldehyde 3-phosphate. The polypeptide is Tryptophan synthase alpha chain (Methanopyrus kandleri (strain AV19 / DSM 6324 / JCM 9639 / NBRC 100938)).